We begin with the raw amino-acid sequence, 184 residues long: Cytochrome c homolog (184 aa).

Topologically, residues 1 to 10 (MDSFELNKIL) are cytoplasmic. A helical; Signal-anchor membrane pass occupies residues 11 to 31 (GAVLGTCLILLVTSFTANALF). At 32 to 184 (SPKMPEKPGF…HPKPLPTASK (153 aa)) the chain is on the periplasmic side. Residues Cys84, Cys87, His88, and Met151 each coordinate heme c.

It belongs to the cytochrome c family. Binds 1 heme c group covalently per subunit.

The protein resides in the cell membrane. In terms of biological role, may be involved in electron transfer from bc1 complex to aa3. The polypeptide is Cytochrome c homolog (cycM) (Bradyrhizobium diazoefficiens (strain JCM 10833 / BCRC 13528 / IAM 13628 / NBRC 14792 / USDA 110)).